The sequence spans 317 residues: 4-diphosphocytidyl-2-C-methyl-D-erythritol kinase (317 aa).

Lys17 is a catalytic residue. 109-119 (PVAGGMGGGSA) contacts ATP. Asp151 is a catalytic residue.

Belongs to the GHMP kinase family. IspE subfamily.

The enzyme catalyses 4-CDP-2-C-methyl-D-erythritol + ATP = 4-CDP-2-C-methyl-D-erythritol 2-phosphate + ADP + H(+). The protein operates within isoprenoid biosynthesis; isopentenyl diphosphate biosynthesis via DXP pathway; isopentenyl diphosphate from 1-deoxy-D-xylulose 5-phosphate: step 3/6. In terms of biological role, catalyzes the phosphorylation of the position 2 hydroxy group of 4-diphosphocytidyl-2C-methyl-D-erythritol. This chain is 4-diphosphocytidyl-2-C-methyl-D-erythritol kinase, found in Paenarthrobacter aurescens (strain TC1).